The primary structure comprises 94 residues: Exodeoxyribonuclease 7 small subunit (94 aa).

The tract at residues 1–21 (MPRAPNDAPSASATPSATPAS) is disordered.

This sequence belongs to the XseB family. As to quaternary structure, heterooligomer composed of large and small subunits.

The protein localises to the cytoplasm. It carries out the reaction Exonucleolytic cleavage in either 5'- to 3'- or 3'- to 5'-direction to yield nucleoside 5'-phosphates.. Functionally, bidirectionally degrades single-stranded DNA into large acid-insoluble oligonucleotides, which are then degraded further into small acid-soluble oligonucleotides. The polypeptide is Exodeoxyribonuclease 7 small subunit (Ralstonia pickettii (strain 12J)).